The following is a 147-amino-acid chain: MVHFTAEEKSTILSLWGKVNVEEAGGEALGRLLVVYPWTQRFFDNFGNLSSASAILGNPKVKAHGKKVLTSFGEAVKNMDNLKGAFAKLSELHCDKLHVDPENFKLLGNVMVIILATHFGKEFTPDVQAAWQKLVSGVATALAHKYH.

The region spanning 3–147 (HFTAEEKSTI…VATALAHKYH (145 aa)) is the Globin domain. 2 positions are modified to phosphoserine: Ser-14 and Ser-51. Heme b-binding residues include His-64 and His-93.

This sequence belongs to the globin family. As to quaternary structure, heterotetramer of two alpha chains and two epsilon chains in early embryonic hemoglobin Gower-2; two zeta chains and two epsilon chains in early embryonic hemoglobin Gower-1. Red blood cells.

In terms of biological role, the epsilon chain is a beta-type chain of early mammalian embryonic hemoglobin. The chain is Hemoglobin subunit epsilon (HBE1) from Eulemur fulvus fulvus (Brown lemur).